A 133-amino-acid polypeptide reads, in one-letter code: Large ribosomal subunit protein bL19 (133 aa).

The protein belongs to the bacterial ribosomal protein bL19 family.

In terms of biological role, this protein is located at the 30S-50S ribosomal subunit interface and may play a role in the structure and function of the aminoacyl-tRNA binding site. In Stenotrophomonas maltophilia (strain R551-3), this protein is Large ribosomal subunit protein bL19.